The primary structure comprises 124 residues: Small ribosomal subunit protein uS13 (124 aa).

The interval 94–124 is disordered; that stretch reads RGMPVRGQRTKTNARTRKGPKRTIAGKKKAR.

The protein belongs to the universal ribosomal protein uS13 family. Part of the 30S ribosomal subunit. Forms a loose heterodimer with protein S19. Forms two bridges to the 50S subunit in the 70S ribosome.

In terms of biological role, located at the top of the head of the 30S subunit, it contacts several helices of the 16S rRNA. In the 70S ribosome it contacts the 23S rRNA (bridge B1a) and protein L5 of the 50S subunit (bridge B1b), connecting the 2 subunits; these bridges are implicated in subunit movement. Contacts the tRNAs in the A and P-sites. The protein is Small ribosomal subunit protein uS13 of Mycobacterium tuberculosis (strain ATCC 25177 / H37Ra).